The following is an 895-amino-acid chain: Dystroglycan 1 (895 aa).

The N-terminal stretch at 1–29 (MRMSVGSAVPLPLWGRTFLLLLSVAVTQS) is a signal peptide. A required for laminin recognition region spans residues 30–408 (HWPSEPSEAV…SQIRPTMTIP (379 aa)). Residues 49 to 71 (SMHSALSDLHETVPTVVGIPDGT) form an O-glycosylated at one site region. Asn-141 carries N-linked (GlcNAc...) asparagine glycosylation. The cysteines at positions 182 and 264 are disulfide-linked. Positions 316–485 (ATPTPVTAIG…PATRMRTTTS (170 aa)) are mucin-like domain. 3 O-linked (Man6P...) threonine glycosylation sites follow: Thr-317, Thr-319, and Thr-379. Residues 381–500 (TLGPIQPTRV…GEPNQRPELK (120 aa)) form a disordered region. The span at 393-403 (AGTTVPSQIRP) shows a compositional bias: polar residues. The span at 413–447 (PSTVTTPPTTTTKKPRVSTPRPATPSTDSSTTTTR) shows a compositional bias: low complexity. The interval 463-485 (TTKAPITRLETASPATRMRTTTS) is O-glycosylated at seven sites with GalNAc. Residues 603 to 712 (KAPARFKAKL…MSITVTGSGS (110 aa)) form the Peptidase S72 domain. Residues Asn-641, Asn-649, and Asn-661 are each glycosylated (N-linked (GlcNAc...) asparagine). Over 654 to 749 (SIVVEWTNNT…DPEKSSEDDV (96 aa)) the chain is Extracellular. Cys-669 and Cys-713 are disulfide-bonded. Positions 724–747 (PMRVPSEAPATEVPDRDPEKSSED) are disordered. Residues 736–747 (VPDRDPEKSSED) are compositionally biased toward basic and acidic residues. The chain crosses the membrane as a helical span at residues 750–775 (YLHTVIPAVVVAAILLIAGIIAMICY). Positions 776 to 782 (RKKRKGK) match the Nuclear localization signal motif. Residues 776–895 (RKKRKGKLTL…YRSPPPYVPP (120 aa)) are Cytoplasmic-facing. Phosphothreonine is present on Thr-790. Residues 819–895 (LQEEKAPLPP…YRSPPPYVPP (77 aa)) are required for interaction with CAV3. Residues 823–895 (KAPLPPPEYP…YRSPPPYVPP (73 aa)) are disordered. A compositionally biased stretch (polar residues) spans 832 to 846 (PNQSMPETTPLNQDT). Residues 859 to 870 (SAPPYQPPPPFT) show a composition bias toward pro residues. The tract at residues 880–895 (PKNMTPYRSPPPYVPP) is required for binding DMD and UTRN. The short motif at 889–892 (PPPY) is the PPXY motif element. Position 892 is a phosphotyrosine; by SRC (Tyr-892).

Monomer. Heterodimer of alpha- and beta-dystroglycan subunits which are the central components of the dystrophin-glycoprotein complex. This complex then can form a dystrophin-associated glycoprotein complex (DGC) which is composed of three subcomplexes: a cytoplasmic complex comprised of DMD (or UTRN), DTNA and a number of syntrophins, such as SNTB1, SNTB2, SNTG1 and SNTG2, the transmembrane dystroglycan complex, and the sarcoglycan-sarcospan complex. Interacts (via the N-terminal of alphaDAG1) with LARGE1; the interaction enhances laminin binding. Interacts with SGCD. Interacts with AGR2 and AGR3. Interacts (betaDAG1) with DMD; the interaction is inhibited by phosphorylation on the PPXY motif. Interacts (betaDAG1, via its PPXY motif) with UTRN (via its WWW and ZZ domains); the interaction is inhibited by phosphorylation on the PPXY motif. Interacts (betaDAG1, via its phosphorylated PPXY motif) with the SH2 domain-containing proteins, FYN, CSK, NCK and SHC. Interacts (betaDAG1) with CAV3 (via a central WW-like domain); the interaction disrupts the binding of DMD. BetaDAG1 directly interacts with ANK3, but not with ANK2; this interaction does not interfere with DMD-binding and is required for retention at costameres. Identified in a dystroglycan complex that contains at least PRX, DRP2, UTRN, DMD and DAG1. Interacts with POMGNT1. BetaDAG1 interacts with CD93. Post-translationally, O-glycosylated. POMGNT1 catalyzes the initial addition of N-acetylglucosamine, giving rise to the GlcNAc(beta1-2)Man(alpha1-)O-Ser/Thr moiety and thus providing the necessary basis for the addition of further carbohydrate moieties. Heavily O-glycosylated comprising of up to two thirds of its mass and the carbohydrate composition differs depending on tissue type. Mucin-type O-glycosylation is important for ligand binding activity. O-mannosylation is found in high abundance in both brain and muscle where the most abundant glycan is Sia-alpha-2-3-Gal-beta-1-4-Glc-NAc-beta-1-2-Man. In muscle, glycosylation on Thr-317, Thr-319 and Thr-379 by a phosphorylated O-mannosyl glycan with the structure 2-(N-acetylamido)-2-deoxygalactosyl-beta-1,3-2-(N-acetylamido)-2-deoxyglucosyl-beta-1,4-6-phosphomannose is mediated by like-acetylglucosaminyltransferase (LARGE1) protein amd is required for laminin binding. O-glycosylated in the N-terminal region with a core 1 or possibly core 8 glycan. The brain form displays a unique glycosylation pattern which is absent in other tissues; this form shows enhanced binding to laminin LAMA5 compared to the skeletal muscle form. In terms of processing, N-glycosylated. Autolytic cleavage produces the alpha and beta subunits. In cutaneous cells, as well as in certain pathological conditions, shedding of beta-dystroglycan can occur releasing a peptide of about 30 kDa. Post-translationally, SRC-mediated phosphorylation of the PPXY motif of the beta subunit recruits SH2 domain-containing proteins, but inhibits binding to WWW domain-containing proteins, DMD and UTRN. This phosphorylation also inhibits nuclear entry. Expressed in brain (at protein level). Expressed in the myelin sheath of peripheral nerves.

It localises to the secreted. It is found in the extracellular space. The protein localises to the cell membrane. The protein resides in the cytoplasm. Its subcellular location is the cytoskeleton. It localises to the nucleus. It is found in the nucleoplasm. The protein localises to the sarcolemma. The protein resides in the postsynaptic cell membrane. Its function is as follows. The dystroglycan complex is involved in a number of processes including laminin and basement membrane assembly, sarcolemmal stability, cell survival, peripheral nerve myelination, nodal structure, cell migration, and epithelial polarization. Functionally, extracellular peripheral glycoprotein that acts as a receptor for extracellular matrix proteins containing laminin-G domains. Receptor for laminin-2 (LAMA2) and agrin in peripheral nerve Schwann cells. Also acts as a receptor for laminin LAMA5. Transmembrane protein that plays important roles in connecting the extracellular matrix to the cytoskeleton. Acts as a cell adhesion receptor in both muscle and non-muscle tissues. Receptor for both DMD and UTRN and, through these interactions, scaffolds axin to the cytoskeleton. Also functions in cell adhesion-mediated signaling and implicated in cell polarity. This Bos taurus (Bovine) protein is Dystroglycan 1.